The following is a 272-amino-acid chain: Ethanolamine ammonia-lyase small subunit (272 aa).

The adenosylcob(III)alamin site is built by valine 161, glutamate 182, and cysteine 211.

This sequence belongs to the EutC family. As to quaternary structure, the basic unit is a heterodimer which dimerizes to form tetramers. The heterotetramers trimerize; 6 large subunits form a core ring with 6 small subunits projecting outwards. It depends on adenosylcob(III)alamin as a cofactor.

The protein localises to the bacterial microcompartment. It carries out the reaction ethanolamine = acetaldehyde + NH4(+). The protein operates within amine and polyamine degradation; ethanolamine degradation. Catalyzes the deamination of various vicinal amino-alcohols to oxo compounds. Allows this organism to utilize ethanolamine as the sole source of nitrogen and carbon in the presence of external vitamin B12. The polypeptide is Ethanolamine ammonia-lyase small subunit (Xanthomonas campestris pv. campestris (strain B100)).